Consider the following 766-residue polypeptide: MASDTPESLMALCTDFCLRNLDGTLGYLLDKETLRLHPDIFLPSEICDRLVNEYVELVNAACNFEPHESFFSLFSDPRSTRLTRIHLREDLVQDQDLEAIRKQDLVELYLTNCEKLSAKSLQTLRSFSHTLVSLSLFGCTNIFYEEENPGGCEDEYLVNPTCQVLVKDFTFEGFSRLRFLNLGRMIDWVPVESLLRPLNSLAALDLSGIQTSDAAFLTQWKDSLVSLVLYNMDLSDDHIRVIVQLHKLRHLDISRDRLSSYYKFKLTREVLSLFVQKLGNLMSLDISGHMILENCSISKMEEEAGQTSIEPSKSSIIPFRALKRPLQFLGLFENSLCRLTHIPAYKVSGDKNEEQVLNAIEAYTEHRPEITSRAINLLFDIARIERCNQLLRALKLVITALKCHKYDRNIQVTGSAALFYLTNSEYRSEQSVKLRRQVIQVVLNGMESYQEVTVQRNCCLTLCNFSIPEELEFQYRRVNELLLSILNPTRQDESIQRIAVHLCNALVCQVDNDHKEAVGKMGFVVTMLKLIQKKLLDKTCDQVMEFSWSALWNITDETPDNCEMFLNFNGMKLFLDCLKEFPEKQELHRNMLGLLGNVAEVKELRPQLMTSQFISVFSNLLESKADGIEVSYNACGVLSHIMFDGPEAWGVCEPQREEVEERMWAAIQSWDINSRRNINYRSFEPILRLLPQGISPVSQHWATWALYNLVSVYPDKYCPLLIKEGGMPLLRDIIKMATARQETKEMARKVIEHCSNFKEENMDTSR.

Residue alanine 2 is modified to N-acetylalanine. LRR repeat units follow at residues serine 226 to leucine 245, histidine 246 to arginine 268, and leucine 278 to glutamate 302. ARM repeat units follow at residues arginine 427–isoleucine 467, aspartate 511–aspartate 556, threonine 558–glutamate 600, lysine 602–phenylalanine 643, and proline 714–asparagine 756.

The protein belongs to the zyg-11 family. As to quaternary structure, interacts with the ELOC-ELOB/Elongin BC complex. Part of an E3 ubiquitin ligase complex including ZER1, CUL2 and Elongin BC. In terms of tissue distribution, expressed in testis, spermatocytes and spermatids (at protein level). Expressed in spermatocytes, spermatids, prostate, skeletal muscle, ovary, small intestine, heart, brain and pancreas.

In terms of biological role, serves as substrate adapter subunit in the E3 ubiquitin ligase complex ZYG11B-CUL2-Elongin BC. Acts to target substrates bearing N-terminal degrons for proteasomal degradation with the first four residues of substrates being the key recognition elements. Involved in the clearance of proteolytic fragments generated by caspase cleavage during apoptosis since N-terminal glycine degrons are strongly enriched at caspase cleavage sites. Also important in the quality control of protein N-myristoylation in which N-terminal glycine degrons are conditionally exposed after a failure of N-myristoylation. The protein is Protein zer-1 homolog of Homo sapiens (Human).